A 635-amino-acid polypeptide reads, in one-letter code: Threonine--tRNA ligase (635 aa).

In terms of domain architecture, TGS spans 1 to 61 (MINISFPDGS…ENDCKLRILT (61 aa)). Residues 242–533 (DHRKLGKELD…LIEEYAGCFP (292 aa)) form a catalytic region. 3 residues coordinate Zn(2+): cysteine 333, histidine 384, and histidine 510.

The protein belongs to the class-II aminoacyl-tRNA synthetase family. In terms of assembly, homodimer. Zn(2+) serves as cofactor.

Its subcellular location is the cytoplasm. It catalyses the reaction tRNA(Thr) + L-threonine + ATP = L-threonyl-tRNA(Thr) + AMP + diphosphate + H(+). In terms of biological role, catalyzes the attachment of threonine to tRNA(Thr) in a two-step reaction: L-threonine is first activated by ATP to form Thr-AMP and then transferred to the acceptor end of tRNA(Thr). Also edits incorrectly charged L-seryl-tRNA(Thr). The polypeptide is Threonine--tRNA ligase (Rickettsia akari (strain Hartford)).